A 740-amino-acid chain; its full sequence is Autotransporter adhesin BtaE (740 aa).

Positions 1 to 11 are cleaved as a signal peptide; that stretch reads MFGLSVNHAYA. The interval 12–647 is surface exposed passenger domain; sequence GPGIFINDGT…LQTLDQANAY (636 aa). Positions 648–686 are outer membrane translocation of the passenger domain; it reads TDKKFGKLNEDIVATRIEARQAAAIGLAAASLRYDDRPG. Beta stranded transmembrane passes span 686–696, 700–710, 719–725, and 728–739; these read GKISAAIGGGF, EGAVALGLGHT, NLSAATS, and NWGMGAGFSYTF. The interval 687-740 is translocator domain; the sequence is KISAAIGGGFWRGEGAVALGLGHTSEDQRMRSNLSAATSGGNWGMGAGFSYTFN.

It belongs to the autotransporter-2 (AT-2) (TC 1.B.40) family. As to quaternary structure, homotrimer.

It localises to the cell surface. Its subcellular location is the cell outer membrane. Functionally, binds to hyaluronic acid and epithelial cells, and is required for full virulence in the mouse model. This Brucella suis biovar 1 (strain 1330) protein is Autotransporter adhesin BtaE.